The following is a 479-amino-acid chain: tRNA modification GTPase MnmE (479 aa).

Arg-25, Glu-82, and Lys-134 together coordinate (6S)-5-formyl-5,6,7,8-tetrahydrofolate. The TrmE-type G domain maps to 230-401; that stretch reads GLRVVIAGQP…LRAALLARAG (172 aa). Asn-240 is a binding site for K(+). GTP-binding positions include 240-245, 259-265, 284-287, 352-355, and 382-384; these read NAGKSS, TPIPGTT, DTAG, NKAD, and SAR. Ser-244 lines the Mg(2+) pocket. Residues Thr-259, Ile-261, and Thr-264 each contribute to the K(+) site. A Mg(2+)-binding site is contributed by Thr-265. Lys-479 provides a ligand contact to (6S)-5-formyl-5,6,7,8-tetrahydrofolate.

Belongs to the TRAFAC class TrmE-Era-EngA-EngB-Septin-like GTPase superfamily. TrmE GTPase family. Homodimer. Heterotetramer of two MnmE and two MnmG subunits. The cofactor is K(+).

The protein localises to the cytoplasm. Functionally, exhibits a very high intrinsic GTPase hydrolysis rate. Involved in the addition of a carboxymethylaminomethyl (cmnm) group at the wobble position (U34) of certain tRNAs, forming tRNA-cmnm(5)s(2)U34. In Leptothrix cholodnii (strain ATCC 51168 / LMG 8142 / SP-6) (Leptothrix discophora (strain SP-6)), this protein is tRNA modification GTPase MnmE.